Reading from the N-terminus, the 275-residue chain is NH(3)-dependent NAD(+) synthetase (275 aa).

Glycine 47–serine 54 lines the ATP pocket. Residue aspartate 53 participates in Mg(2+) binding. Arginine 141 is a binding site for deamido-NAD(+). Position 161 (threonine 161) interacts with ATP. Residue glutamate 166 coordinates Mg(2+). 2 residues coordinate deamido-NAD(+): lysine 174 and aspartate 181. Residues lysine 190 and threonine 212 each coordinate ATP. Residue histidine 261–lysine 262 coordinates deamido-NAD(+).

The protein belongs to the NAD synthetase family. As to quaternary structure, homodimer.

It catalyses the reaction deamido-NAD(+) + NH4(+) + ATP = AMP + diphosphate + NAD(+) + H(+). It participates in cofactor biosynthesis; NAD(+) biosynthesis; NAD(+) from deamido-NAD(+) (ammonia route): step 1/1. Its function is as follows. Catalyzes the ATP-dependent amidation of deamido-NAD to form NAD. Uses ammonia as a nitrogen source. The chain is NH(3)-dependent NAD(+) synthetase from Lacticaseibacillus casei (strain BL23) (Lactobacillus casei).